The chain runs to 68 residues: Stage III sporulation protein AC (68 aa).

Transmembrane regions (helical) follow at residues 5–25 (VNVI…HTIL) and 33–53 (YAQW…ATIV).

It localises to the cell membrane. The protein is Stage III sporulation protein AC (spoIIIAC) of Bacillus subtilis (strain 168).